The chain runs to 453 residues: tRNA modification GTPase MnmE (453 aa).

Residues R22, E79, and K119 each contribute to the (6S)-5-formyl-5,6,7,8-tetrahydrofolate site. Residues 215–376 form the TrmE-type G domain; sequence GMKVVIAGRP…LRNHLKECMG (162 aa). N225 is a binding site for K(+). GTP contacts are provided by residues 225–230, 244–250, 269–272, and 334–337; these read NAGKSS, TDIAGTT, DTAG, and NKAD. Position 229 (S229) interacts with Mg(2+). T244, I246, and T249 together coordinate K(+). T250 provides a ligand contact to Mg(2+). Position 453 (K453) interacts with (6S)-5-formyl-5,6,7,8-tetrahydrofolate.

The protein belongs to the TRAFAC class TrmE-Era-EngA-EngB-Septin-like GTPase superfamily. TrmE GTPase family. In terms of assembly, homodimer. Heterotetramer of two MnmE and two MnmG subunits. The cofactor is K(+).

It localises to the cytoplasm. Its function is as follows. Exhibits a very high intrinsic GTPase hydrolysis rate. Involved in the addition of a carboxymethylaminomethyl (cmnm) group at the wobble position (U34) of certain tRNAs, forming tRNA-cmnm(5)s(2)U34. The chain is tRNA modification GTPase MnmE from Vibrio vulnificus (strain CMCP6).